Consider the following 444-residue polypeptide: Trigger factor (444 aa).

The 86-residue stretch at 165–250 folds into the PPIase FKBP-type domain; the sequence is GDFAKFDFEG…LHEIQELKIP (86 aa).

This sequence belongs to the FKBP-type PPIase family. Tig subfamily.

Its subcellular location is the cytoplasm. The enzyme catalyses [protein]-peptidylproline (omega=180) = [protein]-peptidylproline (omega=0). Functionally, involved in protein export. Acts as a chaperone by maintaining the newly synthesized protein in an open conformation. Functions as a peptidyl-prolyl cis-trans isomerase. The protein is Trigger factor of Campylobacter jejuni subsp. jejuni serotype O:23/36 (strain 81-176).